Here is a 388-residue protein sequence, read N- to C-terminus: Diacylglycerol O-acyltransferase 2 (388 aa).

Residues 1–69 (MKTLIAAYSG…NRSKVEKQLQ (69 aa)) are Cytoplasmic-facing. A helical transmembrane segment spans residues 70–88 (VISVLQWVLSFLVLGVACS). Topologically, residues 89 to 92 (VILM) are lumenal. A helical transmembrane segment spans residues 93-112 (YTFCTDCWLIAVLYFTWLAF). The Cytoplasmic portion of the chain corresponds to 113 to 388 (DWNTPKKGGR…LPETEVLEVN (276 aa)).

This sequence belongs to the diacylglycerol acyltransferase family. In terms of assembly, forms multimeric complexes consisting of several DGAT2 subunits. Interacts with SLC27A1 and this interaction is enhanced in the presence of ZFYVE1. As to expression, predominantly expressed in liver. Also expressed in testis.

Its subcellular location is the endoplasmic reticulum membrane. It localises to the lipid droplet. The protein resides in the cytoplasm. The protein localises to the perinuclear region. The enzyme catalyses an acyl-CoA + a 1,2-diacyl-sn-glycerol = a triacyl-sn-glycerol + CoA. It carries out the reaction all-trans-retinol + an acyl-CoA = an all-trans-retinyl ester + CoA. The catalysed reaction is 1,2-di-(9Z-octadecenoyl)-sn-glycerol + hexadecanoyl-CoA = 1,2-di-(9Z)-octadecenoyl-3-hexadecanoyl-sn-glycerol + CoA. It catalyses the reaction 1,2-di-(9Z-octadecenoyl)-sn-glycerol + (9Z)-octadecenoyl-CoA = 1,2,3-tri-(9Z-octadecenoyl)-glycerol + CoA. The enzyme catalyses 1,3-di-(9Z-octadecenoyl)-glycerol + (9Z)-octadecenoyl-CoA = 1,2,3-tri-(9Z-octadecenoyl)-glycerol + CoA. It carries out the reaction 2,3-di-(9Z)-octadecenoyl-sn-glycerol + (9Z)-octadecenoyl-CoA = 1,2,3-tri-(9Z-octadecenoyl)-glycerol + CoA. The catalysed reaction is 2-(9Z-octadecenoyl)-glycerol + hexadecanoyl-CoA = 1-hexadecanoyl-2-(9Z-octadecenoyl)-sn-glycerol + CoA. It catalyses the reaction 2-(9Z-octadecenoyl)-glycerol + (9Z)-octadecenoyl-CoA = 1,2-di-(9Z-octadecenoyl)-sn-glycerol + CoA. The enzyme catalyses all-trans-retinol + hexadecanoyl-CoA = all-trans-retinyl hexadecanoate + CoA. It carries out the reaction 1-O-(9Z-octadecenyl)-glycerol + (9Z)-octadecenoyl-CoA = 1-O-(9Z-octadecyl)-3-(9Z-octadecenoyl)-glycerol + CoA. The catalysed reaction is 1-(9Z-octadecenoyl)-glycerol + (9Z)-octadecenoyl-CoA = 1,2-di-(9Z-octadecenoyl)-glycerol + CoA. The protein operates within glycerolipid metabolism; triacylglycerol biosynthesis. With respect to regulation, inhibited by niacin. In terms of biological role, essential acyltransferase that catalyzes the terminal and only committed step in triacylglycerol synthesis by using diacylglycerol and fatty acyl CoA as substrates. Required for synthesis and storage of intracellular triglycerides. Probably plays a central role in cytosolic lipid accumulation. In liver, is primarily responsible for incorporating endogenously synthesized fatty acids into triglycerides. Also functions as an acyl-CoA retinol acyltransferase (ARAT). Also able to use 1-monoalkylglycerol (1-MAkG) as an acyl acceptor for the synthesis of monoalkyl-monoacylglycerol (MAMAG). The chain is Diacylglycerol O-acyltransferase 2 from Mus musculus (Mouse).